We begin with the raw amino-acid sequence, 532 residues long: Protoporphyrinogen oxidase (532 aa).

FAD is bound by residues 9–14 (GSGISG), isoleucine 289, and 511–513 (VGI).

The protein belongs to the protoporphyrinogen/coproporphyrinogen oxidase family. Protoporphyrinogen oxidase subfamily. Requires FAD as cofactor.

It is found in the mitochondrion. It carries out the reaction protoporphyrinogen IX + 3 O2 = protoporphyrin IX + 3 H2O2. The protein operates within porphyrin-containing compound metabolism; protoporphyrin-IX biosynthesis; protoporphyrin-IX from protoporphyrinogen-IX: step 1/1. Its function is as follows. Catalyzes the 6-electron oxidation of protoporphyrinogen-IX to form protoporphyrin-IX. In Dictyostelium discoideum (Social amoeba), this protein is Protoporphyrinogen oxidase (ppox).